Reading from the N-terminus, the 152-residue chain is MTDKPFWQTKNLNQLTRSEWESLCDGCGQCCLHKLQDEDTDEIYWTSVACTLLNPETCQCRDYPNRKKTVPDCIFLTPEIVDEVDWLPVTCAYRLVAEGSDLYWWHPLVSGSPETVHEAGISVRGKVTAFDHDMQDDDDYLDHMVTPDKIAR.

It belongs to the UPF0260 family.

The protein is UPF0260 protein BAB1_1496 of Brucella abortus (strain 2308).